A 251-amino-acid chain; its full sequence is Electron transfer flavoprotein subunit beta, mitochondrial (251 aa).

The protein belongs to the ETF beta-subunit/FixA family. In terms of assembly, heterodimer of an alpha and a beta subunit. The cofactor is FAD. It depends on AMP as a cofactor.

It is found in the mitochondrion matrix. In terms of biological role, the electron transfer flavoprotein serves as a specific electron acceptor for several dehydrogenases, including five acyl-CoA dehydrogenases, glutaryl-CoA and sarcosine dehydrogenase. It transfers the electrons to the main mitochondrial respiratory chain via ETF-ubiquinone oxidoreductase (ETF dehydrogenase). Involved in leucine catabolism and in phytol degradation. This is Electron transfer flavoprotein subunit beta, mitochondrial (ETFB) from Arabidopsis thaliana (Mouse-ear cress).